The primary structure comprises 226 residues: SURF1-like protein (226 aa).

Transmembrane regions (helical) follow at residues 3–23 (TNLVVLITFTILISLGFWQLS) and 199–219 (LEYALTWFGLAISLIVIYVIY).

It belongs to the SURF1 family.

It localises to the cell membrane. This Rickettsia felis (strain ATCC VR-1525 / URRWXCal2) (Rickettsia azadi) protein is SURF1-like protein.